The following is a 190-amino-acid chain: Potassium-transporting ATPase KdpC subunit (190 aa).

A helical membrane pass occupies residues 9-29 (VMFILFTIICGGIYPSVVTGI).

It belongs to the KdpC family. The system is composed of three essential subunits: KdpA, KdpB and KdpC.

It localises to the cell inner membrane. Its function is as follows. Part of the high-affinity ATP-driven potassium transport (or Kdp) system, which catalyzes the hydrolysis of ATP coupled with the electrogenic transport of potassium into the cytoplasm. This subunit acts as a catalytic chaperone that increases the ATP-binding affinity of the ATP-hydrolyzing subunit KdpB by the formation of a transient KdpB/KdpC/ATP ternary complex. This Citrifermentans bemidjiense (strain ATCC BAA-1014 / DSM 16622 / JCM 12645 / Bem) (Geobacter bemidjiensis) protein is Potassium-transporting ATPase KdpC subunit.